The primary structure comprises 292 residues: MLGKIALEEAFALPRFEEKTRWWASLFSVDPEIEHADKYGVGYQILSYTAPGVQDIWDPVEAQAGEVGVDRILSIDYPFETFEDAAVVLRRDVQTYGFIGALVNDTQRTGPMGNNQEEAYNINDYIAEQIRDKPDRFGAFTLSMHNPQEAGRDNAARLFERNPTGTIYEKLGAFRDYDAKVKAEITDINKLRIENASWDIFWQTDTEAQALAVEDADVWFDGAEFYDNAAMQYVIAYGAKQADIYGPINHWFEDRLLGLAETCKWLVGPDLSFAHGVSLHVLGMTVNGVFDR.

Cys263 is an active-site residue.

This sequence belongs to the metallo-dependent hydrolases superfamily. Homotetramer.

The catalysed reaction is 2,3-dihydroxybenzoate + H(+) = catechol + CO2. It participates in aromatic compound metabolism; benzoate degradation via hydroxylation. In Aspergillus niger, this protein is 2,3-dihydroxybenzoate decarboxylase.